Here is a 1925-residue protein sequence, read N- to C-terminus: Methylcytosine dioxygenase tet3-A (1925 aa).

The CXXC-type zinc finger occupies 62 to 103 (SNKKRKRCGVCVPCLRKEPCGACYNCVNRSTSHQICKMRKCE). Zn(2+)-binding residues include C69, C72, C75, C81, C84, C87, C97, and C102. Disordered stretches follow at residues 457–476 (KNAL…QNKK), 630–685 (KSQK…NAVF), 774–812 (GAKD…QNDL), and 833–892 (DFSL…PISH). Polar residues predominate over residues 465–476 (SPRQTSWEQNKK). Basic residues predominate over residues 665–677 (KPPRKQVQIKKPR). A compositionally biased stretch (low complexity) spans 777 to 797 (DSCPTPSTDDASSSSGQGDSA). 2 stretches are compositionally biased toward polar residues: residues 841–856 (APSQ…QISG) and 883–892 (PALSNNPISH). Zn(2+)-binding residues include C982, C984, C1042, H1068, and C1070. R1110 is a 2-oxoglutarate binding site. Zn(2+)-binding residues include C1120, C1122, C1138, C1147, and C1207. Position 1223 (C1223) interacts with 2-oxoglutarate. H1229 provides a ligand contact to Zn(2+). Residues H1231 and D1233 each coordinate Fe cation. H1265 provides a ligand contact to 2-oxoglutarate. Disordered stretches follow at residues 1307 to 1364 (SEPA…QTKP), 1474 to 1513 (LADG…KSFN), 1556 to 1600 (SVHS…LPND), and 1722 to 1769 (NWAS…EEEI). The span at 1316–1347 (RQLDAKKAAAEKKKLQKEKLVSPDKTKQEPAD) shows a compositional bias: basic and acidic residues. Residues 1350–1363 (MCQQNPGVPQQQTK) show a composition bias toward polar residues. The segment covering 1490 to 1499 (SYRRSSEVPH) has biased composition (basic and acidic residues). Polar residues-rich tracts occupy residues 1502 to 1513 (SLQNPNSQKSFN), 1556 to 1572 (SVHS…QTSD), and 1730 to 1742 (VGNS…SQNH). Residue H1804 participates in Fe cation binding. 1819-1821 (RIS) provides a ligand contact to 2-oxoglutarate. Positions 1837–1870 (LALWEAKMKLLAERARVKEEEAARLGIKQEVKSL) form a coiled coil.

The protein belongs to the TET family. The cofactor is Fe(2+). Requires Zn(2+) as cofactor. Detected in embryo (at protein level). Detected in embryonic head, in developing brain, neural tube and eye.

The protein localises to the nucleus. Its subcellular location is the chromosome. The catalysed reaction is a 5-methyl-2'-deoxycytidine in DNA + 2-oxoglutarate + O2 = a 5-hydroxymethyl-2'-deoxycytidine in DNA + succinate + CO2. It carries out the reaction a 5-hydroxymethyl-2'-deoxycytidine in DNA + 2-oxoglutarate + O2 = a 5-formyl-2'-deoxycytidine in DNA + succinate + CO2 + H2O. The enzyme catalyses a 5-formyl-2'-deoxycytidine in DNA + 2-oxoglutarate + O2 = a 5-carboxyl-2'-deoxycytidine in DNA + succinate + CO2 + H(+). Functionally, dioxygenase that catalyzes the conversion of the modified genomic base 5-methylcytosine (5mC) into 5-hydroxymethylcytosine (5hmC) and plays a key role in epigenetic chromatin reprogramming during embryonic development. Conversion of 5mC into 5hmC probably constitutes the first step in cytosine demethylation. Selectively binds to the promoter region of target genes and contributes to regulate the expression of numerous developmental genes, including pax6, rax, sox9 and six3. May also contribute to the regulation of target genes in ways that do not require its enzyme activity. The chain is Methylcytosine dioxygenase tet3-A from Xenopus laevis (African clawed frog).